Consider the following 249-residue polypeptide: 23S rRNA (guanosine-2'-O-)-methyltransferase RlmB (249 aa).

S-adenosyl-L-methionine-binding residues include Gly-200, Ile-220, and Leu-229.

It belongs to the class IV-like SAM-binding methyltransferase superfamily. RNA methyltransferase TrmH family. RlmB subfamily.

The protein localises to the cytoplasm. The enzyme catalyses guanosine(2251) in 23S rRNA + S-adenosyl-L-methionine = 2'-O-methylguanosine(2251) in 23S rRNA + S-adenosyl-L-homocysteine + H(+). In terms of biological role, specifically methylates the ribose of guanosine 2251 in 23S rRNA. This chain is 23S rRNA (guanosine-2'-O-)-methyltransferase RlmB, found in Xanthomonas campestris pv. campestris (strain ATCC 33913 / DSM 3586 / NCPPB 528 / LMG 568 / P 25).